We begin with the raw amino-acid sequence, 553 residues long: Methionine--tRNA ligase (553 aa).

A 'HIGH' region motif is present at residues 12–22; it reads PYANSQLHLGH. Zn(2+) contacts are provided by C144, C147, C157, and C160. The 'KMSKS' region motif lies at 332-336; sequence KFSKS. Residue K335 coordinates ATP.

The protein belongs to the class-I aminoacyl-tRNA synthetase family. MetG type 1 subfamily. As to quaternary structure, monomer. It depends on Zn(2+) as a cofactor.

It localises to the cytoplasm. The catalysed reaction is tRNA(Met) + L-methionine + ATP = L-methionyl-tRNA(Met) + AMP + diphosphate. In terms of biological role, is required not only for elongation of protein synthesis but also for the initiation of all mRNA translation through initiator tRNA(fMet) aminoacylation. This Dehalococcoides mccartyi (strain ATCC BAA-2266 / KCTC 15142 / 195) (Dehalococcoides ethenogenes (strain 195)) protein is Methionine--tRNA ligase.